The primary structure comprises 308 residues: Aspartate carbamoyltransferase catalytic subunit (308 aa).

Residues arginine 59 and threonine 60 each coordinate carbamoyl phosphate. L-aspartate is bound at residue lysine 87. Positions 109, 139, and 142 each coordinate carbamoyl phosphate. L-aspartate-binding residues include arginine 172 and arginine 224. 2 residues coordinate carbamoyl phosphate: alanine 265 and proline 266.

Belongs to the aspartate/ornithine carbamoyltransferase superfamily. ATCase family. In terms of assembly, heterododecamer (2C3:3R2) of six catalytic PyrB chains organized as two trimers (C3), and six regulatory PyrI chains organized as three dimers (R2).

The catalysed reaction is carbamoyl phosphate + L-aspartate = N-carbamoyl-L-aspartate + phosphate + H(+). It participates in pyrimidine metabolism; UMP biosynthesis via de novo pathway; (S)-dihydroorotate from bicarbonate: step 2/3. In terms of biological role, catalyzes the condensation of carbamoyl phosphate and aspartate to form carbamoyl aspartate and inorganic phosphate, the committed step in the de novo pyrimidine nucleotide biosynthesis pathway. This Streptococcus thermophilus (strain ATCC BAA-491 / LMD-9) protein is Aspartate carbamoyltransferase catalytic subunit.